The following is a 790-amino-acid chain: Phenylalanine--tRNA ligase beta subunit (790 aa).

In terms of domain architecture, tRNA-binding spans 39-154 (PDSLNTVVTG…ADTPLGESAC (116 aa)). The region spanning 404–483 (FSPLSLSVRP…FVQKTQKILP (80 aa)) is the B5 domain. The Mg(2+) site is built by Asp-457, Asp-463, Glu-466, and Glu-467. The region spanning 694–790 (PIYPASSRDI…KLANIGQGNS (97 aa)) is the FDX-ACB domain.

Belongs to the phenylalanyl-tRNA synthetase beta subunit family. Type 1 subfamily. As to quaternary structure, tetramer of two alpha and two beta subunits. Mg(2+) is required as a cofactor.

It is found in the cytoplasm. It carries out the reaction tRNA(Phe) + L-phenylalanine + ATP = L-phenylalanyl-tRNA(Phe) + AMP + diphosphate + H(+). This Chlamydia trachomatis serovar A (strain ATCC VR-571B / DSM 19440 / HAR-13) protein is Phenylalanine--tRNA ligase beta subunit.